Consider the following 422-residue polypeptide: Dipeptidase aclJ (422 aa).

A helical transmembrane segment spans residues 28-45 (LAYSVTLTLVALFFTFAL). H77 and D79 together coordinate Zn(2+). A glycan (N-linked (GlcNAc...) asparagine) is linked at N96. C128 and C219 form a disulfide bridge. Residue E190 participates in Zn(2+) binding. H217 provides a ligand contact to substrate. N-linked (GlcNAc...) asparagine glycosylation is present at N270. An intrachain disulfide couples C287 to C319. The substrate site is built by R291 and D351.

It belongs to the metallo-dependent hydrolases superfamily. Peptidase M19 family. Zn(2+) serves as cofactor.

It is found in the membrane. The enzyme catalyses an L-aminoacyl-L-amino acid + H2O = 2 an L-alpha-amino acid. It functions in the pathway mycotoxin biosynthesis. Functionally, dipeptidase; part of the gene cluster that mediates the biosynthesis of aspirochlorine (or antibiotic A30641), an unusual halogenated spiro compound with distinctive antifungal properties due to selective inhibition of protein biosynthesis, and which is also active against bacteria, viruses, and murine tumor cells. The non-ribosomal peptide synthetase (NRPS) aclP is responsible the formation of the diketopiperazine (DKP) core from the condensation of 2 phenylalanine residues. One Phe residue is tailored into chlorotyrosine by hydroxylation and chlorination, whereas the second Phe undergoes an unprecedented C-C bond cleavage to be converted into glycine. After formation of the DKP, sulfur is incorporated into the DKP by conjugation with glutathione by aclG, followed by its stepwise degradation to the thiol by aclI, aclJ and aclK, and the dithiol oxidation by aclT. In addition, oxygenases (aclB, aclC, aclL and aclO) and O-methyltransferases (aclM and aclU) act as tailoring enzymes to produce the intermediate dechloroaspirochlorine. Ultimately, chlorination of dechloroaspirochlorine by the halogenase aclH is the last step in the aspirochlorine pathway. The polypeptide is Dipeptidase aclJ (Aspergillus oryzae (strain ATCC 42149 / RIB 40) (Yellow koji mold)).